Consider the following 405-residue polypeptide: Aspartic protease (405 aa).

The signal sequence occupies residues 1-21 (MISDTVIAILAVALVGSTVQA). Residues 22-81 (APVDATATSTSGIIAVPISKSAAQLAREADPVVSLDWLKKTKAQAQYKHKQANARLHSKR) constitute a propeptide, removed in mature form. Residues 97-402 (WTGPITIGGQ…DVGNARVGFA (306 aa)) enclose the Peptidase A1 domain. The active site involves aspartate 113. Cysteine 126 and cysteine 131 form a disulfide bridge. The active site involves aspartate 290. The cysteines at positions 332 and 366 are disulfide-linked.

This sequence belongs to the peptidase A1 family.

It is found in the secreted. With respect to regulation, inhibited by pepstatin A. In terms of biological role, possesses acidic protease activity. Hydrolyzes casein and azoalbumin in vitro. This chain is Aspartic protease, found in Phaffia rhodozyma (Yeast).